The sequence spans 241 residues: Uridylate kinase (241 aa).

15 to 18 (KLSG) is an ATP binding site. Residue G57 coordinates UMP. Residues G58 and R62 each contribute to the ATP site. Residues D77 and 139–146 (IGHTLFTT) contribute to the UMP site. The ATP site is built by T166, N167, F172, and D175.

It belongs to the UMP kinase family. As to quaternary structure, homohexamer.

The protein resides in the cytoplasm. It catalyses the reaction UMP + ATP = UDP + ADP. The protein operates within pyrimidine metabolism; CTP biosynthesis via de novo pathway; UDP from UMP (UMPK route): step 1/1. Inhibited by UTP. In terms of biological role, catalyzes the reversible phosphorylation of UMP to UDP. This chain is Uridylate kinase, found in Wigglesworthia glossinidia brevipalpis.